The following is a 184-amino-acid chain: Phosphodiesterase YfcE (184 aa).

Mn(2+)-binding residues include Asp-9, His-11, Asp-37, Asn-73, His-105, His-127, and His-129.

This sequence belongs to the metallophosphoesterase superfamily. YfcE family. It depends on Mn(2+) as a cofactor.

In terms of biological role, shows phosphodiesterase activity. This Escherichia coli O157:H7 protein is Phosphodiesterase YfcE (yfcE).